A 274-amino-acid polypeptide reads, in one-letter code: MHTLKNIINKTFDNKLNIHQHNVDQKTTDAINQVLHMLNIGKLRVSEKINGFWITHQWLKKAILLSFLVNKNVLFSNKQTCFYDKIKLKYCNYTEEKFKNEKIRIVPPATVRHGAFIGKNTILMPCYVNTGAYIDEGTMIDTWATVGSCAQIGKNVHLSGGVGIGGVLEPLQNNPTIIEDNCFIGARSEIVEGVIIESNSVISMGVFIGQSTKIYDRNNKKILYGKVPSGSVVVPGSLPSKNNCNLYCVVIVKQVNAQTLSKTGINKLLREITE.

Substrate contacts are provided by R104 and D141.

It belongs to the transferase hexapeptide repeat family. As to quaternary structure, homotrimer.

The protein resides in the cytoplasm. The catalysed reaction is (S)-2,3,4,5-tetrahydrodipicolinate + succinyl-CoA + H2O = (S)-2-succinylamino-6-oxoheptanedioate + CoA. The protein operates within amino-acid biosynthesis; L-lysine biosynthesis via DAP pathway; LL-2,6-diaminopimelate from (S)-tetrahydrodipicolinate (succinylase route): step 1/3. This is 2,3,4,5-tetrahydropyridine-2,6-dicarboxylate N-succinyltransferase from Buchnera aphidicola subsp. Baizongia pistaciae (strain Bp).